A 205-amino-acid polypeptide reads, in one-letter code: NADH-ubiquinone oxidoreductase chain 6 (205 aa).

3 helical membrane passes run 48–68 (FFAM…FLFV), 86–106 (YLPV…FILD), and 150–170 (VWFL…IVLT).

The protein belongs to the complex I subunit 6 family. In terms of assembly, complex I is composed of at least 49 different subunits.

The protein localises to the mitochondrion membrane. The enzyme catalyses a ubiquinone + NADH + 5 H(+)(in) = a ubiquinol + NAD(+) + 4 H(+)(out). Its function is as follows. Core subunit of the mitochondrial membrane respiratory chain NADH dehydrogenase (Complex I) that is believed to belong to the minimal assembly required for catalysis. Complex I functions in the transfer of electrons from NADH to the respiratory chain. The immediate electron acceptor for the enzyme is believed to be ubiquinone. The chain is NADH-ubiquinone oxidoreductase chain 6 (ND6) from Arabidopsis thaliana (Mouse-ear cress).